The primary structure comprises 323 residues: Porphobilinogen deaminase (323 aa).

C251 is subject to S-(dipyrrolylmethanemethyl)cysteine.

This sequence belongs to the HMBS family. Monomer. The cofactor is dipyrromethane.

The catalysed reaction is 4 porphobilinogen + H2O = hydroxymethylbilane + 4 NH4(+). It participates in porphyrin-containing compound metabolism; protoporphyrin-IX biosynthesis; coproporphyrinogen-III from 5-aminolevulinate: step 2/4. It functions in the pathway porphyrin-containing compound metabolism; chlorophyll biosynthesis. Tetrapolymerization of the monopyrrole PBG into the hydroxymethylbilane pre-uroporphyrinogen in several discrete steps. The polypeptide is Porphobilinogen deaminase (hemC) (Nostoc sp. (strain PCC 7120 / SAG 25.82 / UTEX 2576)).